Here is a 59-residue protein sequence, read N- to C-terminus: MKFSSIILLTLLICSMSIFGNCQVETNKKCQGGSCASVCRRVIGVAAGKCINGRCVCYP.

Positions 1–22 (MKFSSIILLTLLICSMSIFGNC) are cleaved as a signal peptide. A Pyrrolidone carboxylic acid modification is found at Gln23. 3 disulfides stabilise this stretch: Cys30-Cys50, Cys35-Cys55, and Cys39-Cys57.

Belongs to the short scorpion toxin superfamily. Potassium channel inhibitor family. Alpha-KTx 15 subfamily. Expressed by the venom gland.

The protein localises to the secreted. Functionally, blocker of A-type voltage-gated potassium channels of cerebellar granular cells. May also inhibit Kv4/KCND when coexpressed with DPP6 or DPP10. The occlusion of the outer entry of the K(+) conducting pore is partially reversible and affects both open and closed channels. It shares the same target in rat brain than BmTX3 (AC Q8I0L5) and AmmTX3 (AC P60208). This chain is Potassium channel toxin alpha-KTx 15.5, found in Androctonus australis (Sahara scorpion).